Reading from the N-terminus, the 282-residue chain is Major surface antigen 4 (282 aa).

The N-terminal stretch at Met-1 to Ala-29 is a signal peptide.

It belongs to the surface antigen msp4 family.

The polypeptide is Major surface antigen 4 (msp4) (Anaplasma marginale).